A 796-amino-acid polypeptide reads, in one-letter code: N-terminal acetyltransferase B complex subunit MDM20 (796 aa).

Ser-2 carries the post-translational modification N-acetylserine.

The protein belongs to the MDM20/NAA25 family. In terms of assembly, component of the N-terminal acetyltransferase B (NatB) complex, which is composed of NAT3 and MDM20.

Its subcellular location is the cytoplasm. Non-catalytic subunit of the NatB N-terminal acetyltransferase, which catalyzes acetylation of the amino-terminal methionine residues of all proteins beginning with Met-Asp or Met-Glu and of some proteins beginning with Met-Asn or Met-Met. NatB acetylates TPM1 protein and regulates tropomyocin-actin interactions. MDM20 is required for mitochondrial inheritance during budding and together with TPM1, is essential for the integrity and assembly of actin cables. Genetically interacts with CIN8. In Saccharomyces cerevisiae (strain ATCC 204508 / S288c) (Baker's yeast), this protein is N-terminal acetyltransferase B complex subunit MDM20 (MDM20).